The sequence spans 555 residues: Probable beta-glucosidase btgE (555 aa).

An N-terminal signal peptide occupies residues 1–18; the sequence is MRGAILATAAAFAGTAVA. Disordered regions lie at residues 92-114 and 263-290; these read TSSA…VTLP and TTSA…PTGA. Residues 263 to 288 are compositionally biased toward low complexity; sequence TTSAASTTTAVPSSSTTTSSATSVPT. Glu392 (proton donor) is an active-site residue. Catalysis depends on Glu488, which acts as the Nucleophile.

Belongs to the glycosyl hydrolase 17 family.

It localises to the secreted. The protein localises to the cell wall. The enzyme catalyses Hydrolysis of terminal, non-reducing beta-D-glucosyl residues with release of beta-D-glucose.. It functions in the pathway glycan metabolism; cellulose degradation. Its function is as follows. Beta-glucosidases are one of a number of cellulolytic enzymes involved in the degradation of cellulosic biomass. Catalyzes the last step releasing glucose from the inhibitory cellobiose. In Emericella nidulans (strain FGSC A4 / ATCC 38163 / CBS 112.46 / NRRL 194 / M139) (Aspergillus nidulans), this protein is Probable beta-glucosidase btgE (btgE).